The sequence spans 1067 residues: MEVTDIGNKEEGKVWHRKPTPGKSVLASLVRTAQQGKVVRFLHVTFDTTGDCFLAGDHHGNIYLFDISRNRFRLVLKTGQACTALAFNLRRTTEFLVALADYSIRCFDKDTKQLVSWMRGHEGAVSSISVHSSGRYAITTSSDTAQLWDLDTFQRKRKLNIRQSVGIQKVFFLPLSNTILSCFSDDSIFAWECDTLFCKYQLPLPDSGPRISYKAFAVTLDGKSLASGGRSNLLHLWCLESRQLVRVIQMPSQVRTIRQLEFLPDSFDGGASQTLGVLSQDGMMRFINIHTCKLLFHIGSHDEAITAVAVNPSGRHIVAVMDNGRINIYSVQNLTQELNKPPPAQVAVVSGSEGVPDLPNLKMKVRSEVLPRPKRISGRRPQVKLLSLPAASSAEDKENELPAGLNKKRLVALLKAFGEYPAKYRMFVWRSLLCLPENHAAYSSLTDKGLHSAFLTLHEKYPIKSQKLQRALQRVLSALAHWAAIFGEVEYLPLVAFPFVKLFQNNAMLCFEVVATVIENWCQHWFEYFPNPPLNILSMVENVVAHHDKELLQHLVDCGITSQLYVWPLLETLFSEVLTRDEWLRLFDNIFSNHPSFLLMACAAYIICCREPLLHCSQRQDFEYFFHHRNNLDVGAMIKEAYRFMSSTPADLHPRTMLSDFTPLTSGQYPVFNKYPEFIVEYQSRERERIRLQEMEYLRERQQMSALRADFVRRRAEEEAFYAQQELLQKAEEQRKHVLEQEEEKLTQQRAKLAAMKRELKVKELQLLDATRRRFLKHQQELQASQIKKLDQEISRKMDLRDKETATAVQDLEIRQMELEVQRKRLEQRLLKEQQHVGHKVEEEVRIKMKEAEENLKEMLHGAETNMQALEESLAEVCRLDLESDWQREVVERLQKADAERERSRGGVEELQRQTGTEEQGLVNAMREEAHRKKDEAAAQIQESLQPRPSTHSDGQRLMGIHSAYAPPGFAHRHACSAGLKGESLTDRNKSASFKQAETNMVCLNSSSPPESTSTAFSFCRGRTQLDSGERELLKEIRELRQKLAARAKEGSSASSQTVCTPTPVSP.

WD repeat units follow at residues 36 to 75 (GKVV…FRLV), 76 to 119 (LKTG…SWMR), 120 to 161 (GHEG…KLNI), 162 to 201 (RQSV…CKYQ), 202 to 249 (LPLP…RVIQ), and 250 to 288 (MPSQ…RFIN). Positions 419–594 (EYPAKYRMFV…RLFDNIFSNH (176 aa)) constitute a Rab-GAP TBC domain. Positions 724–773 (QQELLQKAEEQRKHVLEQEEEKLTQQRAKLAAMKRELKVKELQLLDATRR) form a coiled coil. Basic and acidic residues-rich tracts occupy residues 896–912 (KADA…EELQ) and 926–937 (MREEAHRKKDEA). Disordered stretches follow at residues 896–955 (KADA…HSDG) and 1045–1067 (AARA…PVSP). 2 stretches are compositionally biased toward polar residues: residues 941 to 953 (IQES…STHS) and 1052 to 1067 (SSAS…PVSP).

It is found in the cytoplasm. Its subcellular location is the cytoskeleton. The protein localises to the microtubule organizing center. It localises to the centrosome. The protein resides in the centriolar satellite. It is found in the cilium basal body. Molecular adapter which is involved in cilium biogenesis. Part of a functional complex including OFD1 a centriolar protein involved in cilium assembly. Could regulate the cAMP-dependent phosphorylation of OFD1, and its subsequent ubiquitination by PJA2 which ultimately leads to its proteasomal degradation. The chain is TBC1 domain family member 31 from Oryzias latipes (Japanese rice fish).